Here is a 183-residue protein sequence, read N- to C-terminus: Protein FAM180B (183 aa).

The signal sequence occupies residues 1-23; sequence MAATLQFLVCLVVAICLLSGVTT.

It belongs to the FAM180 family.

It is found in the secreted. This chain is Protein FAM180B (FAM180B), found in Homo sapiens (Human).